A 213-amino-acid chain; its full sequence is Mite allergen Der f 7 (213 aa).

An N-terminal signal peptide occupies residues 1 to 17; the sequence is MMKFLLIAAVAFVAVSA. The N-linked (GlcNAc...) asparagine glycan is linked to N151.

It belongs to the mite group 7 allergen family.

The protein resides in the secreted. This chain is Mite allergen Der f 7 (DERF7), found in Dermatophagoides farinae (American house dust mite).